Reading from the N-terminus, the 696-residue chain is MADPTTYRPAPGTIPTEPGVYKFRDENRRVIYVGKAKNLRSRLSNYFQDVTQLHPRTRQMVFAASSVEWTVVSSEVEALQLEYTWIKRFDPRFNVKYRDDKTYPMLAVSTGERFPRAFFFRGPRRKGVRYFGPYSHAWAVRETLDLLTRVFPMRTCSKGVFNRHESLGRPCLLGYIDKCAAPCVGRVSEEEHREIVDGFTSFMAGHTDKVTRKLNADMMAAAEELDFERAARLRDDLEAIDKVMEKQAVVLGDGTDADIIAFATDQLEAAVQVFNIRGGRIRGQRGWVVEKPGDYAGLLVDATTQPEGDAPETDPALPFLMQDFLVQFYGDAVERAETEAKEDAAVIERRGVDKHSFEEAAPVTRASVVPREILVQVAPNEAEQTLKVLEELRGAGVDARVPQRGDKRALMETVERNAKELLKQHKLKRVGDLTARSAALQELQEALDMEQAPLRIECTDISHIQGTDVVASLVVFEDGLPRKSDYRRYRVKEAAGDGHSNDVASIAEITRRRFLRHNQDKLAVPEAEEFDGSTFSDEKVEEMSTDARRFAYPPQIFIVDGGAPQVAAAQEVFDELGIVDVVLIGLAKRLEEIWLPGDPDPVILPRNSQALFLLQQIRDEAHRFAITYHRQQRSKRMRVSELDSIKGLGQSRRTELVKHFGSVAKLKEASVEDISQVKGFGPKLAEAVYEGLHASK.

Residues 16 to 95 form the GIY-YIG domain; that stretch reads TEPGVYKFRD…IKRFDPRFNV (80 aa). A UVR domain is found at 208 to 243; it reads DKVTRKLNADMMAAAEELDFERAARLRDDLEAIDKV.

It belongs to the UvrC family. As to quaternary structure, interacts with UvrB in an incision complex.

The protein localises to the cytoplasm. Functionally, the UvrABC repair system catalyzes the recognition and processing of DNA lesions. UvrC both incises the 5' and 3' sides of the lesion. The N-terminal half is responsible for the 3' incision and the C-terminal half is responsible for the 5' incision. The protein is UvrABC system protein C of Corynebacterium glutamicum (strain ATCC 13032 / DSM 20300 / JCM 1318 / BCRC 11384 / CCUG 27702 / LMG 3730 / NBRC 12168 / NCIMB 10025 / NRRL B-2784 / 534).